The primary structure comprises 148 residues: Large ribosomal subunit protein bL9 (148 aa).

This sequence belongs to the bacterial ribosomal protein bL9 family.

Functionally, binds to the 23S rRNA. The sequence is that of Large ribosomal subunit protein bL9 from Bacillus cereus (strain B4264).